A 165-amino-acid chain; its full sequence is Lipoprotein signal peptidase (165 aa).

Transmembrane regions (helical) follow at residues 9–29 (PFLW…LAVV), 65–85 (WQKY…LFFL), and 97–119 (TGYA…HGFV). Catalysis depends on residues D121 and D139. A helical membrane pass occupies residues 134–154 (VFNVADIAICIGAGLLAIDAF).

Belongs to the peptidase A8 family.

It localises to the cell inner membrane. The enzyme catalyses Release of signal peptides from bacterial membrane prolipoproteins. Hydrolyzes -Xaa-Yaa-Zaa-|-(S,diacylglyceryl)Cys-, in which Xaa is hydrophobic (preferably Leu), and Yaa (Ala or Ser) and Zaa (Gly or Ala) have small, neutral side chains.. It functions in the pathway protein modification; lipoprotein biosynthesis (signal peptide cleavage). This protein specifically catalyzes the removal of signal peptides from prolipoproteins. The protein is Lipoprotein signal peptidase of Histophilus somni (strain 2336) (Haemophilus somnus).